The chain runs to 546 residues: Chaperonin GroEL (546 aa).

Residues 29-32, lysine 50, 86-90, glycine 414, and aspartate 492 each bind ATP; these read TMGP and DGTTT.

The protein belongs to the chaperonin (HSP60) family. In terms of assembly, forms a cylinder of 14 subunits composed of two heptameric rings stacked back-to-back. Interacts with the co-chaperonin GroES.

It localises to the cytoplasm. It carries out the reaction ATP + H2O + a folded polypeptide = ADP + phosphate + an unfolded polypeptide.. In terms of biological role, together with its co-chaperonin GroES, plays an essential role in assisting protein folding. The GroEL-GroES system forms a nano-cage that allows encapsulation of the non-native substrate proteins and provides a physical environment optimized to promote and accelerate protein folding. This Helicobacter pylori (strain HPAG1) protein is Chaperonin GroEL.